Consider the following 737-residue polypeptide: Protein-glucosylgalactosylhydroxylysine glucosidase (737 aa).

300 to 301 (WD) provides a ligand contact to substrate. The active-site Proton donor is the glutamate 430. Residue 498–499 (KQ) coordinates substrate. The segment at 681 to 737 (RSAGRIQMSPPKLPGSSSSEFPGRTFSDVRDPLQSPLWVTLGSSSPTESLTVDPASE) is disordered. The span at 721–730 (LGSSSPTESL) shows a compositional bias: polar residues.

It belongs to the glycosyl hydrolase 65 family.

It catalyses the reaction (5R)-5-O-[alpha-D-glucosyl-(1-&gt;2)-beta-D-galactosyl]-5-hydroxy-L-lysyl-[collagen] + H2O = (5R)-5-O-(beta-D-galactosyl)-5-hydroxy-L-lysyl-[collagen] + D-glucose. Catalyzes the hydrolysis of glucose from the disaccharide unit linked to hydroxylysine residues of collagen and collagen-like proteins. This Homo sapiens (Human) protein is Protein-glucosylgalactosylhydroxylysine glucosidase.